The primary structure comprises 152 residues: MFDILVYLFENYYTPQACPAADVLAKRLAAAGFEHEDIDDALGWLYGLAETTERCVELAHAPATGIRIYTDAEYQQLGTESIGFITFLESAGVLPAPLREIVIDRALASPETPISLSKIKIIALMVLWSQEAEIDNLVLEELLDDEGSRRLH.

The protein belongs to the Smg family.

This chain is Protein Smg homolog, found in Bordetella bronchiseptica (strain ATCC BAA-588 / NCTC 13252 / RB50) (Alcaligenes bronchisepticus).